A 450-amino-acid polypeptide reads, in one-letter code: Probable glycylpeptide N-tetradecanoyltransferase (450 aa).

Positions 1 to 28 (MSHGHSHDGAPCGGHHGDDGAGGSRPSV) are disordered. Tetradecanoyl-CoA is bound by residues Gln67, Phe68, Trp69, Phe200, Leu201, Cys202, Val203, Ser209, Arg211, Val212, and Ala213.

It belongs to the NMT family.

The protein localises to the cytoplasm. The catalysed reaction is N-terminal glycyl-[protein] + tetradecanoyl-CoA = N-tetradecanoylglycyl-[protein] + CoA + H(+). Adds a myristoyl group to the N-terminal glycine residue of certain cellular proteins. This chain is Probable glycylpeptide N-tetradecanoyltransferase (nmt-1), found in Caenorhabditis elegans.